Consider the following 270-residue polypeptide: Shikimate dehydrogenase (NADP(+)) (270 aa).

Shikimate contacts are provided by residues 14–16 (SKS) and Thr-60. Lys-64 (proton acceptor) is an active-site residue. Residue Glu-76 coordinates NADP(+). The shikimate site is built by Asn-85 and Asp-101. NADP(+) is bound by residues 125–129 (GAGGA), 149–154 (NRTASR), and Met-213. Position 215 (Tyr-215) interacts with shikimate. An NADP(+)-binding site is contributed by Gly-236.

It belongs to the shikimate dehydrogenase family. Homodimer.

The enzyme catalyses shikimate + NADP(+) = 3-dehydroshikimate + NADPH + H(+). It participates in metabolic intermediate biosynthesis; chorismate biosynthesis; chorismate from D-erythrose 4-phosphate and phosphoenolpyruvate: step 4/7. Functionally, involved in the biosynthesis of the chorismate, which leads to the biosynthesis of aromatic amino acids. Catalyzes the reversible NADPH linked reduction of 3-dehydroshikimate (DHSA) to yield shikimate (SA). The polypeptide is Shikimate dehydrogenase (NADP(+)) (Stutzerimonas stutzeri (strain A1501) (Pseudomonas stutzeri)).